A 553-amino-acid polypeptide reads, in one-letter code: Undecaprenyl phosphate-alpha-4-amino-4-deoxy-L-arabinose arabinosyl transferase (553 aa).

A run of 12 helical transmembrane segments spans residues 8–28 (LLFSLFYALYYLIPLELRALW), 81–101 (FAVRIGSVFSITLSALLVYWL), 113–133 (LLSAVVFLTCLLVYGVGSYAV), 136–156 (PMVTLWLVAAMCSFWLAAQSA), 176–196 (LMTKGFLALAVPVVAIVPWMI), 204–224 (LLLFGPLALVSAALITAPWAI), 255–275 (APFWYYLPMLLAGALPWVGLL), 289–309 (NSGSLYLLCWTVMPLLFFSLA), 313–333 (LPTYILPCFAPLAILLAHHGI), 351–371 (VAFGVIAALAVILVLAPWGLV), 384–404 (VLLGASAFLFWAAVGLACLVA), and 412–432 (AALCPLGLALLAGAVIPDKVI).

Belongs to the glycosyltransferase 83 family.

It is found in the cell inner membrane. The enzyme catalyses 4-amino-4-deoxy-alpha-L-arabinopyranosyl di-trans,octa-cis-undecaprenyl phosphate + lipid IVA = lipid IIA + di-trans,octa-cis-undecaprenyl phosphate.. Its pathway is lipopolysaccharide metabolism; 4-amino-4-deoxy-beta-L-arabinose-lipid A biosynthesis. Catalyzes the transfer of the L-Ara4N moiety of the glycolipid undecaprenyl phosphate-alpha-L-Ara4N to lipid A. The modified arabinose is attached to lipid A and is required for resistance to polymyxin and cationic antimicrobial peptides. The chain is Undecaprenyl phosphate-alpha-4-amino-4-deoxy-L-arabinose arabinosyl transferase from Erwinia tasmaniensis (strain DSM 17950 / CFBP 7177 / CIP 109463 / NCPPB 4357 / Et1/99).